The sequence spans 267 residues: UPF0246 protein Dshi_3333 (267 aa).

This sequence belongs to the UPF0246 family.

The protein is UPF0246 protein Dshi_3333 of Dinoroseobacter shibae (strain DSM 16493 / NCIMB 14021 / DFL 12).